The primary structure comprises 84 residues: Small ribosomal subunit protein uS17 (84 aa).

Belongs to the universal ribosomal protein uS17 family. In terms of assembly, part of the 30S ribosomal subunit.

Its function is as follows. One of the primary rRNA binding proteins, it binds specifically to the 5'-end of 16S ribosomal RNA. The protein is Small ribosomal subunit protein uS17 of Proteus mirabilis (strain HI4320).